Reading from the N-terminus, the 154-residue chain is Ribosomal RNA-processing protein 14-N (154 aa).

The tract at residues 36-154 (WKQKKSTLEE…KHKASPRAGF (119 aa)) is disordered. Phosphoserine is present on serine 80. Threonine 83 carries the post-translational modification Phosphothreonine. Residues 105–133 (QDLREKRKAGDLNQKRQNKRPVENEKDSQ) are compositionally biased toward basic and acidic residues. Residues 140–154 (KVQKKKHKASPRAGF) are compositionally biased toward basic residues.

The protein belongs to the SURF6 family.

The protein resides in the nucleus. It localises to the nucleolus. Functionally, involved in ribosome biogenesis and cell polarity. Required for the synthesis of both 40S and 60S ribosomal subunits and may also play some direct role in correct positioning of the mitotic spindle during mitosis. The polypeptide is Ribosomal RNA-processing protein 14-N (rrp14n) (Schizosaccharomyces pombe (strain 972 / ATCC 24843) (Fission yeast)).